The sequence spans 209 residues: Large ribosomal subunit protein uL3 (209 aa).

It belongs to the universal ribosomal protein uL3 family. In terms of assembly, part of the 50S ribosomal subunit. Forms a cluster with proteins L14 and L19.

One of the primary rRNA binding proteins, it binds directly near the 3'-end of the 23S rRNA, where it nucleates assembly of the 50S subunit. The sequence is that of Large ribosomal subunit protein uL3 from Carboxydothermus hydrogenoformans (strain ATCC BAA-161 / DSM 6008 / Z-2901).